The following is a 303-amino-acid chain: Uricase (303 aa).

At alanine 2 the chain carries N-acetylalanine. N6-acetyllysine; alternate is present on residues lysine 10 and lysine 23. An N6-succinyllysine; alternate mark is found at lysine 10 and lysine 23. Lysine 23 functions as the Charge relay system in the catalytic mechanism. An N6-acetyllysine mark is found at lysine 27 and lysine 36. A phosphoserine mark is found at serine 39 and serine 63. The active-site Charge relay system is threonine 68. Urate contacts are provided by threonine 68 and aspartate 69. An N6-acetyllysine mark is found at lysine 118, lysine 122, and lysine 164. A urate-binding site is contributed by phenylalanine 170. N6-acetyllysine is present on residues lysine 175 and lysine 185. Arginine 187 provides a ligand contact to urate. An N6-acetyllysine; alternate mark is found at lysine 220 and lysine 227. Lysine 220 and lysine 227 each carry N6-succinyllysine; alternate. The residue at position 231 (serine 231) is a Phosphoserine. Urate contacts are provided by valine 234, glutamine 235, and asparagine 261. Catalysis depends on histidine 263, which acts as the Charge relay system. Residue lysine 277 is modified to N6-acetyllysine. Residue tyrosine 288 is modified to Phosphotyrosine. Positions 301 to 303 match the Microbody targeting signal motif; that stretch reads SRL.

Belongs to the uricase family. Post-translationally, acetylation of Lys-118, Lys-164 and Lys-290 is observed in liver mitochondria from fasted mice but not from fed mice. May be deacetylated by Sirt5; however it is unclear whether Sirt5 mediates deacetylation or desuccinylation of Uox; additional evidence is required to validate these results.

It localises to the peroxisome. Its subcellular location is the mitochondrion. It carries out the reaction urate + O2 + H2O = 5-hydroxyisourate + H2O2. The protein operates within purine metabolism; urate degradation; (S)-allantoin from urate: step 1/3. Its function is as follows. Catalyzes the oxidation of uric acid to 5-hydroxyisourate, which is further processed to form (S)-allantoin. In Mus musculus (Mouse), this protein is Uricase (Uox).